Reading from the N-terminus, the 351-residue chain is Glycerol-3-phosphate dehydrogenase [NAD(P)+] (351 aa).

Positions 18, 19, 38, and 122 each coordinate NADPH. Residues K122, G153, and S155 each coordinate sn-glycerol 3-phosphate. Position 157 (A157) interacts with NADPH. Positions 208, 261, 271, 272, and 273 each coordinate sn-glycerol 3-phosphate. K208 functions as the Proton acceptor in the catalytic mechanism. R272 is an NADPH binding site. E297 contacts NADPH.

It belongs to the NAD-dependent glycerol-3-phosphate dehydrogenase family.

The protein resides in the cytoplasm. It catalyses the reaction sn-glycerol 3-phosphate + NAD(+) = dihydroxyacetone phosphate + NADH + H(+). The enzyme catalyses sn-glycerol 3-phosphate + NADP(+) = dihydroxyacetone phosphate + NADPH + H(+). It functions in the pathway membrane lipid metabolism; glycerophospholipid metabolism. Functionally, catalyzes the reduction of the glycolytic intermediate dihydroxyacetone phosphate (DHAP) to sn-glycerol 3-phosphate (G3P), the key precursor for phospholipid synthesis. The sequence is that of Glycerol-3-phosphate dehydrogenase [NAD(P)+] from Bordetella bronchiseptica (strain ATCC BAA-588 / NCTC 13252 / RB50) (Alcaligenes bronchisepticus).